The primary structure comprises 427 residues: MLGIVKMEGHETTDWSNYYQDAQEGYSSVPVSNMPQGLATMNTYMTMNPMSSGSNITSGSFNMPYGNSGLGAGLSPSGMSGMGSAGAMNGMGSGVPSMGSALSPSNMNAIQSAQQASMNSLSYSSMNSGMSPMGYGATNINRTRDSKTFRRSYPHAKPPYSYISLITMAIQQAPSKMLTLSEIYQWIMDLFPYYRQNQQRWQNSIRHSLSFNDCFIKVSRSPDKPGKGSYWTLHPDSGNMFENGCYLRRQKRFKCEKTQGGKGNQDGRKDHSGPSSPLHRVHGKSSQMDSSSSMSNPSSSPQALEHNGSNGEMKPQVAAGPSPLSSHQNHSTHSLAHETHIHLKGDPHYSFNHPFSINNLMSSSEQQHKLDFKAYEQALQQYSSYGGGLQGMPLGSPSMTGRGTIEPSALEPTYYQGVYSRPVLNTS.

Positions Lys-157–Lys-251 form a DNA-binding region, fork-head. Residues Glu-256 to Ser-272 are compositionally biased toward basic and acidic residues. Positions Glu-256 to Ala-336 are disordered. Residues Ser-285 to Gln-302 show a composition bias toward low complexity. Over residues Pro-323–Ser-334 the composition is skewed to polar residues.

Present in the vegetal pole and marginal zone but not the animal pole of gastrulae and in equal levels in the dorsal and ventral halves of both gastrulae and neurulae. At neurula stage, expressed in the notochord. During tailbud stages, expressed in the foregut, brain, hypocord, neural floor plate and in two lines of cells just dorsal and ventral to the notochord. Expressed in the adult liver.

The protein localises to the nucleus. Probable transcription factor. This is Forkhead box protein A1-B (foxa1-b) from Xenopus laevis (African clawed frog).